The chain runs to 554 residues: Trimethyltridecatetraene synthase (554 aa).

The helical transmembrane segment at 1 to 21 (MSAAVALAVILAVYVVLRYIS) threads the bilayer. Cys-464 provides a ligand contact to heme.

The protein belongs to the cytochrome P450 family. Requires heme as cofactor.

It is found in the membrane. It catalyses the reaction (6E,10E)-geranyllinalool + reduced [NADPH--hemoprotein reductase] + O2 = (3E,7E)-4,8,12-trimethyltrideca 1,3,7,11-tetraene + but-3-en-2-one + oxidized [NADPH--hemoprotein reductase] + 2 H2O + H(+). The protein operates within secondary metabolite biosynthesis; terpenoid biosynthesis. Component of the volatile terpenes biosynthesis pathways. Converts mainly geranyllinalool to trimethyltridecatetraene (TMTT). The sequence is that of Trimethyltridecatetraene synthase from Zea mays (Maize).